Consider the following 318-residue polypeptide: Transaldolase (318 aa).

Residue Lys132 is the Schiff-base intermediate with substrate of the active site.

The protein belongs to the transaldolase family. Type 1 subfamily. Homodimer.

It is found in the cytoplasm. It catalyses the reaction D-sedoheptulose 7-phosphate + D-glyceraldehyde 3-phosphate = D-erythrose 4-phosphate + beta-D-fructose 6-phosphate. It functions in the pathway carbohydrate degradation; pentose phosphate pathway; D-glyceraldehyde 3-phosphate and beta-D-fructose 6-phosphate from D-ribose 5-phosphate and D-xylulose 5-phosphate (non-oxidative stage): step 2/3. Functionally, transaldolase is important for the balance of metabolites in the pentose-phosphate pathway. The protein is Transaldolase of Shewanella sp. (strain MR-7).